A 75-amino-acid chain; its full sequence is Putative UPF0377 protein YAL067W-A (75 aa).

Belongs to the UPF0377 family.

This chain is Putative UPF0377 protein YAL067W-A, found in Saccharomyces cerevisiae (strain ATCC 204508 / S288c) (Baker's yeast).